We begin with the raw amino-acid sequence, 95 residues long: DNA-binding protein CENSYa_1764 (95 aa).

The tract at residues 1–21 is disordered; that stretch reads MSYTDPDDSLPEHVPGEAEMS.

The protein belongs to the PDCD5 family.

In Cenarchaeum symbiosum (strain A), this protein is DNA-binding protein CENSYa_1764.